Reading from the N-terminus, the 261-residue chain is Cytosolic Fe-S cluster assembly factor Nubp2 homolog (261 aa).

14–21 (GKGGVGKS) lines the ATP pocket. The [4Fe-4S] cluster site is built by Cys-188 and Cys-191.

The protein belongs to the Mrp/NBP35 ATP-binding proteins family. NUBP2/CFD1 subfamily. In terms of assembly, heterotetramer of 2 Nubp1 and 2 Nubp2 chains. It depends on [4Fe-4S] cluster as a cofactor.

The protein localises to the cytoplasm. Its function is as follows. Component of the cytosolic iron-sulfur (Fe/S) protein assembly (CIA) machinery. Required for maturation of extramitochondrial Fe-S proteins. The Nubp1-Nubp2 heterotetramer forms a Fe-S scaffold complex, mediating the de novo assembly of an Fe-S cluster and its transfer to target apoproteins. This chain is Cytosolic Fe-S cluster assembly factor Nubp2 homolog, found in Drosophila ananassae (Fruit fly).